Here is a 288-residue protein sequence, read N- to C-terminus: Protease HtpX homolog (288 aa).

Transmembrane regions (helical) follow at residues 6–26 (TAFLMVALMLVFIAVGGYVGG) and 28–48 (QGMMIAFLMAAGMNIFSYFFS). Histidine 130 is a binding site for Zn(2+). The active site involves glutamate 131. Histidine 134 contributes to the Zn(2+) binding site. Helical transmembrane passes span 140-160 (ILTGSVAAILAGAIAMVANFA) and 179-199 (VIMLIIAVVMPLAATVIQMAI). Zn(2+) is bound at residue glutamate 204.

Belongs to the peptidase M48B family. It depends on Zn(2+) as a cofactor.

Its subcellular location is the cell inner membrane. This is Protease HtpX homolog from Campylobacter concisus (strain 13826).